We begin with the raw amino-acid sequence, 98 residues long: uncharacterized protein (98 aa).

It belongs to the HesB/IscA family.

This is an uncharacterized protein from Staphylococcus epidermidis (strain ATCC 35984 / DSM 28319 / BCRC 17069 / CCUG 31568 / BM 3577 / RP62A).